A 412-amino-acid polypeptide reads, in one-letter code: Glucose/galactose transporter (412 aa).

Helical transmembrane passes span 21 to 41, 62 to 82, 90 to 110, 113 to 133, 158 to 178, 192 to 212, 239 to 259, 310 to 330, 331 to 351, 363 to 383, and 388 to 408; these read YGFA…ITCL, LIQF…GQLV, GIVV…PAAS, VYAL…ILQV, FNSL…LSAA, FPYL…AILK, LGAI…SFLV, AFVA…IAMW, SVLA…SLAL, GILC…GALA, and IHLA…YGLI.

This sequence belongs to the major facilitator superfamily. FHS transporter (TC 2.A.1.7) family.

It is found in the cell inner membrane. Functionally, intake of glucose and galactose. This Brucella abortus (strain 2308) protein is Glucose/galactose transporter (gluP).